Consider the following 237-residue polypeptide: Ribosomal RNA large subunit methyltransferase E (237 aa).

The S-adenosyl-L-methionine site is built by Gly76, Trp78, Asp99, Asp115, and Asp139. The Proton acceptor role is filled by Lys179.

The protein belongs to the class I-like SAM-binding methyltransferase superfamily. RNA methyltransferase RlmE family.

It localises to the cytoplasm. It catalyses the reaction uridine(2552) in 23S rRNA + S-adenosyl-L-methionine = 2'-O-methyluridine(2552) in 23S rRNA + S-adenosyl-L-homocysteine + H(+). Functionally, specifically methylates the uridine in position 2552 of 23S rRNA at the 2'-O position of the ribose in the fully assembled 50S ribosomal subunit. This Rhodopseudomonas palustris (strain TIE-1) protein is Ribosomal RNA large subunit methyltransferase E.